Here is a 495-residue protein sequence, read N- to C-terminus: MSTRKVSYFYDNEVGNHYYGPNHPMKPHRMRMTHDLVLNYGIYKKMQIFRPRKASELELTNFHSDDYINFLKLVTPDNMHDYSKQLVKFNVREDCPVFDGMYNFCQISSGGSIGCAVKVNSKESDVAINWAGGLHHAKKSEASGFCYTNDIVLSILELLKHHERVLYIDIDIHHGDGVEEAFYTTDRVMTVSFHKYGDYFPGTGDVKDIGADKGKYYSLNFPLKDGIDDESYQSIFRPIIRSVMDFYRPGAVVIQCGADSLTGDRLGCFNLTLRGHAQCIEFLKSFNVPLVVLGGGGYTIKNVARCWTYETSILVDSELKDELPYNDYLEYYGPEYRLHITPNNMENQNTKDYLEKLKIQLLENLRNLNHAPAAAHHDIPPDSFNYSDDEDDEDPDVRISEADRDKKVHHQGELSDSDEEDGRRNYSNGLEATSTSRRNQVSISAYDKERPSYNSRNNNNNNNNNNNNNNNNNNNSNNNNSHHHNEDADVDMDSG.

D94 is a substrate binding site. H136 serves as the catalytic Proton acceptor. Position 144 (G144) interacts with substrate. A divalent metal cation-binding residues include D171, H173, and D259. Y298 provides a ligand contact to substrate. The segment at 372–495 (PAAAHHDIPP…EDADVDMDSG (124 aa)) is disordered. The segment covering 396-413 (DVRISEADRDKKVHHQGE) has biased composition (basic and acidic residues). The segment covering 425-443 (NYSNGLEATSTSRRNQVSI) has biased composition (polar residues). Residues 454 to 480 (NSRNNNNNNNNNNNNNNNNNNNSNNNN) are compositionally biased toward low complexity.

The protein belongs to the histone deacetylase family. HD type 1 subfamily.

It is found in the nucleus. The protein resides in the cytoplasm. It catalyses the reaction N(6)-acetyl-L-lysyl-[histone] + H2O = L-lysyl-[histone] + acetate. Its function is as follows. Responsible for the deacetylation of lysine residues on the N-terminal part of the core histones (H2A, H2B, H3 and H4). Histone deacetylation plays an important role in transcriptional regulation, cell cycle progression and developmental events. Histone deacetylases act via the formation of large multiprotein complexes. The polypeptide is Type-1 histone deacetylase 1 (hdaA) (Dictyostelium discoideum (Social amoeba)).